A 425-amino-acid chain; its full sequence is Enolase (425 aa).

Q163 lines the (2R)-2-phosphoglycerate pocket. E205 (proton donor) is an active-site residue. Residues D242, E285, and D312 each coordinate Mg(2+). (2R)-2-phosphoglycerate is bound by residues K337, R366, S367, and K388. K337 functions as the Proton acceptor in the catalytic mechanism.

The protein belongs to the enolase family. Mg(2+) is required as a cofactor.

Its subcellular location is the cytoplasm. The protein resides in the secreted. The protein localises to the cell surface. It carries out the reaction (2R)-2-phosphoglycerate = phosphoenolpyruvate + H2O. It participates in carbohydrate degradation; glycolysis; pyruvate from D-glyceraldehyde 3-phosphate: step 4/5. Functionally, catalyzes the reversible conversion of 2-phosphoglycerate (2-PG) into phosphoenolpyruvate (PEP). It is essential for the degradation of carbohydrates via glycolysis. The chain is Enolase from Acidiphilium cryptum (strain JF-5).